The following is a 415-amino-acid chain: tRNA(Met) cytidine acetate ligase (415 aa).

Residues 7–20, Gly-102, Asn-165, and 190–191 each bind ATP; these read IVEY…HLYH and RI.

It belongs to the TmcAL family.

It localises to the cytoplasm. The catalysed reaction is cytidine(34) in elongator tRNA(Met) + acetate + ATP = N(4)-acetylcytidine(34) in elongator tRNA(Met) + AMP + diphosphate. Functionally, catalyzes the formation of N(4)-acetylcytidine (ac(4)C) at the wobble position of elongator tRNA(Met), using acetate and ATP as substrates. First activates an acetate ion to form acetyladenylate (Ac-AMP) and then transfers the acetyl group to tRNA to form ac(4)C34. In Acetivibrio thermocellus (strain ATCC 27405 / DSM 1237 / JCM 9322 / NBRC 103400 / NCIMB 10682 / NRRL B-4536 / VPI 7372) (Clostridium thermocellum), this protein is tRNA(Met) cytidine acetate ligase.